A 144-amino-acid chain; its full sequence is Elicitor-responsive protein 3 (144 aa).

Residues 1-103 (MVQGTLEVLL…YTEGSIPPTV (103 aa)) enclose the C2 domain. Ca(2+) is bound by residues D20, D26, D73, D75, and D81. The segment at 123–144 (TPEDDRDRGLSEEDIGGWKQSS) is disordered.

The cofactor is Ca(2+).

This is Elicitor-responsive protein 3 (ERG3) from Oryza sativa subsp. indica (Rice).